A 98-amino-acid chain; its full sequence is Alpha-elicitin capsicein (98 aa).

3 disulfides stabilise this stretch: C3-C71, C27-C56, and C51-C95.

It belongs to the elicitin family.

It localises to the secreted. Functionally, induces local and distal defense responses (incompatible hypersensitive reaction) in plants from the solanaceae and cruciferae families. Elicits leaf necrosis and causes the accumulation of pathogenesis-related proteins. Might interact with the lipidic molecules of the plasma membrane. The polypeptide is Alpha-elicitin capsicein (Phytophthora capsici).